Here is a 393-residue protein sequence, read N- to C-terminus: SH3 domain-binding protein 5-like (393 aa).

2 disordered regions span residues 1–59 (MAEL…LDPR) and 272–332 (HARR…DTDT). Residue T13 is modified to Phosphothreonine. Basic and acidic residues predominate over residues 18 to 28 (LRPEVVEDEVP). Phosphoserine is present on residues S30 and S49. Coiled-coil stretches lie at residues 59 to 140 (RIQE…YERA) and 169 to 272 (WQEM…EQIH). Over residues 304–313 (GDSGIEGAEG) the composition is skewed to gly residues. Residues 317-332 (EEGSSLGPGPAPDTDT) are compositionally biased toward low complexity. A phosphoserine mark is found at S343, S350, S358, S362, and S378. The disordered stretch occupies residues 364-393 (DGQELGTRSGGRRGSDGGVRGGRHQRSVSL). Basic residues predominate over residues 384–393 (GGRHQRSVSL).

The protein belongs to the SH3BP5 family.

Its function is as follows. Functions as a guanine nucleotide exchange factor (GEF) for RAB11A. The polypeptide is SH3 domain-binding protein 5-like (SH3BP5L) (Pongo abelii (Sumatran orangutan)).